A 130-amino-acid polypeptide reads, in one-letter code: Small ribosomal subunit protein uS8 (130 aa).

The protein belongs to the universal ribosomal protein uS8 family. In terms of assembly, part of the 30S ribosomal subunit. Contacts proteins S5 and S12.

Functionally, one of the primary rRNA binding proteins, it binds directly to 16S rRNA central domain where it helps coordinate assembly of the platform of the 30S subunit. This is Small ribosomal subunit protein uS8 from Haemophilus influenzae (strain 86-028NP).